Reading from the N-terminus, the 68-residue chain is Large ribosomal subunit protein uL29 (68 aa).

It belongs to the universal ribosomal protein uL29 family.

This chain is Large ribosomal subunit protein uL29, found in Nitrobacter winogradskyi (strain ATCC 25391 / DSM 10237 / CIP 104748 / NCIMB 11846 / Nb-255).